The primary structure comprises 486 residues: PTS system N-acetylmuramic acid-specific EIIBC component (486 aa).

One can recognise a PTS EIIB type-1 domain in the interval M1–G89. C28 (phosphocysteine intermediate; for EIIB activity) is an active-site residue. The PTS EIIC type-1 domain maps to S127–S486. 10 helical membrane-spanning segments follow: residues F129–F149, L170–G190, A196–N216, F230–I250, M268–M288, A312–V332, L347–F367, G381–P401, I411–G431, and I453–L473.

It localises to the cell inner membrane. The enzyme catalyses N-acetyl-beta-D-muramate(out) + N(pros)-phospho-L-histidyl-[protein] = N-acetyl-beta-D-muramate 6-phosphate(in) + L-histidyl-[protein]. The phosphoenolpyruvate-dependent sugar phosphotransferase system (sugar PTS), a major carbohydrate active transport system, catalyzes the phosphorylation of incoming sugar substrates concomitantly with their translocation across the cell membrane. This system is involved in N-acetylmuramic acid (MurNAc) transport, yielding cytoplasmic MurNAc-6-P. Is also able to take up anhydro-N-acetylmuramic acid (anhMurNAc), but cannot phosphorylate the carbon 6, probably because of the 1,6-anhydro ring. This chain is PTS system N-acetylmuramic acid-specific EIIBC component (murP), found in Vibrio vulnificus (strain YJ016).